The chain runs to 425 residues: Proteinase-activated receptor 1 (425 aa).

The N-terminal stretch at 1-21 is a signal peptide; sequence MGPRRLLLVAACFSLCGPLLS. Positions 22–41 are excised as a propeptide; that stretch reads ARTRARRPESKATNATLDPR. N-linked (GlcNAc...) asparagine glycosylation is found at N35, N62, and N75. Topologically, residues 42–102 are extracellular; that stretch reads SFLLRNPNDK…SGYLTSSWLT (61 aa). The chain crosses the membrane as a helical span at residues 103 to 128; that stretch reads LFVPSVYTGVFVVSLPLNIMAIVVFI. The Cytoplasmic portion of the chain corresponds to 129 to 137; sequence LKMKVKKPA. Residues 138–157 form a helical membrane-spanning segment; the sequence is VVYMLHLATADVLFVSVLPF. Residues 158–176 are Extracellular-facing; sequence KISYYFSGSDWQFGSELCR. Residues C175 and C254 are joined by a disulfide bond. Residues 177 to 198 traverse the membrane as a helical segment; sequence FVTAAFYCNMYASILLMTVISI. Over 199–218 the chain is Cytoplasmic; that stretch reads DRFLAVVYPMQSLSWRTLGR. The chain crosses the membrane as a helical span at residues 219–239; sequence ASFTCLAIWALAIAGVVPLLL. The Extracellular segment spans residues 240-268; that stretch reads KEQTIQVPGLNITTCHDVLNETLLEGYYA. Residues N250 and N259 are each glycosylated (N-linked (GlcNAc...) asparagine). A helical membrane pass occupies residues 269-288; that stretch reads YYFSAFSAVFFFVPLIISTV. Over 289-311 the chain is Cytoplasmic; sequence CYVSIIRCLSSSAVANRSKKSRA. The chain crosses the membrane as a helical span at residues 312–334; the sequence is LFLSAAVFCIFIICFGPTNVLLI. Over 335-350 the chain is Extracellular; it reads AHYSFLSHTSTTEAAY. Residues 351–374 traverse the membrane as a helical segment; the sequence is FAYLLCVCVSSISCCIDPLIYYYA. Over 375–425 the chain is Cytoplasmic; the sequence is SSECQRYVYSILCCKESSDPSSYNSSGQLMASKMDTCSSNLNNSIYKKLLT. Phosphoserine is present on S418.

This sequence belongs to the G-protein coupled receptor 1 family. In terms of processing, proteolytic cleavage by thrombin generates a new N-terminus that functions as a tethered ligand. Also proteolytically cleaved by cathepsin CTSG. Cleavage at 41-Arg-|-Ser-42 by CTSG results in receptor activation while cleavage at 55-Phe-|-Trp-56 results in inhibition of receptor activation. Phosphorylated in the C-terminal tail; probably mediating desensitization prior to the uncoupling and internalization of the receptor. As to expression, platelets and vascular endothelial cells.

The protein localises to the cell membrane. High affinity receptor that binds the activated thrombin, leading to calcium release from intracellular stores. The thrombin-activated receptor signaling pathway is mediated through PTX-insensitive G proteins, activation of phospholipase C resulting in the production of 1D-myo-inositol 1,4,5-trisphosphate (InsP3) which binds to InsP3 receptors causing calcium release from the stores. In astrocytes, the calcium released into the cytosol allows the Ca(2+)-dependent release of L-glutamate into the synaptic cleft through BEST1, that targets the neuronal postsynaptic GRIN2A/NMDAR receptor resulting in the synaptic plasticity regulation. May play a role in platelets activation and in vascular development. Mediates up-regulation of pro-inflammatory cytokines, such as MCP-1/CCL2 and IL6, triggered by coagulation factor Xa (F10) in cardiac fibroblasts and umbilical vein endothelial cells. The protein is Proteinase-activated receptor 1 of Homo sapiens (Human).